Consider the following 123-residue polypeptide: MDDSKVVGGKVKKPGKRGRKPAKIDLKAKLERSRQSARECRARKKLRYQYLEELVSSRERAICALREELEMYKQWCMAMDQGKIPSEIRALLTGEEQSKPQQNSSRHPKAGKTDANTNSLVGN.

Positions 1–24 (MDDSKVVGGKVKKPGKRGRKPAKI) are disordered. The segment covering 10-21 (KVKKPGKRGRKP) has biased composition (basic residues). Residues 23–86 (KIDLKAKLER…MAMDQGKIPS (64 aa)) enclose the bZIP domain. The tract at residues 29 to 60 (KLERSRQSARECRARKKLRYQYLEELVSSRER) is basic motif. The leucine-zipper stretch occupies residues 62 to 69 (ICALREEL). Residues 92 to 123 (LTGEEQSKPQQNSSRHPKAGKTDANTNSLVGN) are disordered. Residues 114-123 (DANTNSLVGN) show a composition bias toward polar residues.

Belongs to the bZIP family. ATF subfamily. Interacts with CREB1; regulates CREB1 phosphorylation, stability and transcriptional activity. In terms of processing, phosphorylated by AMPK. Widely expressed with higher expression in adipose tissue, skeletal muscle, and liver (at protein level).

The protein localises to the nucleus. Its function is as follows. Probable regulator of CREB1 transcriptional activity which is involved in adipose cells differentiation. May also play a regulatory role in the cell cycle. In Mus musculus (Mouse), this protein is cAMP-responsive element-binding protein-like 2 (Crebl2).